A 500-amino-acid polypeptide reads, in one-letter code: Plasma protease C1 inhibitor (500 aa).

Positions 1-22 are cleaved as a signal peptide; the sequence is MASRLTLLTLLLLLLAGDRASS. Positions 20-31 are enriched in low complexity; it reads ASSNPNATSSSS. Positions 20–43 are disordered; it reads ASSNPNATSSSSQDPESLQDRGEG. A glycan (N-linked (GlcNAc...) (complex) asparagine) is linked at Asn25. Thr47 and Thr48 each carry an O-linked (GalNAc...) threonine glycan. An O-linked (GalNAc...) serine glycan is attached at Ser64. The disordered stretch occupies residues 65-118; it reads LPTTNSTTNSATKITANTTDEPTTQPTTEPTTQPTIQPTQPTTQLPTDSPTQPT. Positions 67–118 are enriched in low complexity; the sequence is TTNSTTNSATKITANTTDEPTTQPTTEPTTQPTIQPTQPTTQLPTDSPTQPT. N-linked (GlcNAc...) asparagine glycosylation is present at Asn69. Residue Thr71 is glycosylated (O-linked (GalNAc...) threonine). An N-linked (GlcNAc...) asparagine glycan is attached at Asn81. Residues Thr83, Thr88, Thr92, and Thr96 are each glycosylated (O-linked (GalNAc...) threonine). Tandem repeats lie at residues 85–88, 89–92, 93–96, 97–100, 101–104, 105–108, and 116–119. A 7 X 4 AA tandem repeats of [QE]-P-T-[TQ] region spans residues 85-119; it reads EPTTQPTTEPTTQPTIQPTQPTTQLPTDSPTQPTT. 2 disulfides stabilise this stretch: Cys123-Cys428 and Cys130-Cys205. N-linked (GlcNAc...) (complex) asparagine glycans are attached at residues Asn238 and Asn253. The N-linked (GlcNAc...) asparagine; in variant TA glycan is linked to Asn272. Asn352 carries an N-linked (GlcNAc...) (complex) asparagine glycan.

It belongs to the serpin family. As to quaternary structure, interacts with MASP1. (Microbial infection) Binds to E.coli stcE which allows localization of SERPING1 to cell membranes thus protecting the bacteria against complement-mediated lysis. In terms of processing, highly glycosylated (49%) with N- and O-glycosylation. O-glycosylated with core 1 or possibly core 8 glycans. N-glycan heterogeneity at Asn-25: Hex5HexNAc4 (minor), dHex1Hex5HexNAc4 (minor), Hex6HexNAc5 (major) and dHex1Hex6HexNAc5 (minor). Post-translationally, cleaved by C1S in vitro. (Microbial infection) Can be proteolytically cleaved by E.coli stcE.

It localises to the secreted. Its function is as follows. Serine protease inhibitor, which acrs as a regulator of the classical complement pathway. Forms a proteolytically inactive stoichiometric complex with the C1r or C1s proteases. May also regulate blood coagulation, fibrinolysis and the generation of kinins. Very efficient inhibitor of FXIIa. Inhibits chymotrypsin and kallikrein. This is Plasma protease C1 inhibitor (SERPING1) from Homo sapiens (Human).